The primary structure comprises 230 residues: Large ribosomal subunit protein uL1 (230 aa).

The protein belongs to the universal ribosomal protein uL1 family. As to quaternary structure, part of the 50S ribosomal subunit.

Its function is as follows. Binds directly to 23S rRNA. The L1 stalk is quite mobile in the ribosome, and is involved in E site tRNA release. Protein L1 is also a translational repressor protein, it controls the translation of the L11 operon by binding to its mRNA. In Acholeplasma laidlawii (strain PG-8A), this protein is Large ribosomal subunit protein uL1.